The sequence spans 128 residues: Small ribosomal subunit protein uS11 (128 aa).

This sequence belongs to the universal ribosomal protein uS11 family. In terms of assembly, part of the 30S ribosomal subunit. Interacts with proteins S7 and S18. Binds to IF-3.

Located on the platform of the 30S subunit, it bridges several disparate RNA helices of the 16S rRNA. Forms part of the Shine-Dalgarno cleft in the 70S ribosome. This is Small ribosomal subunit protein uS11 from Methylococcus capsulatus (strain ATCC 33009 / NCIMB 11132 / Bath).